A 472-amino-acid polypeptide reads, in one-letter code: Eukaryotic translation initiation factor 2 subunit 3 (472 aa).

Ala2 carries the post-translational modification N-acetylalanine. Ser16 is subject to Phosphoserine. Residues 39–248 (QATINIGTIG…IVKKIPVPPR (210 aa)) form the tr-type G domain. The segment at 48–55 (GHVAHGKS) is G1. Position 51–56 (51–56 (AHGKST)) interacts with GTP. The segment at 76 to 80 (NITIK) is G2. Residues 134-137 (DCPG) form a G3 region. GTP is bound by residues 190–193 (NKID) and 225–227 (SAQ). Residues 190–193 (NKID) are G4. Residues 225–227 (SAQ) form a G5 region. The tract at residues 457–469 (GQIRRGVTIKPTV) is interacts with CDC123.

It belongs to the TRAFAC class translation factor GTPase superfamily. Classic translation factor GTPase family. EIF2G subfamily. Eukaryotic translation initiation factor 2 eIF2 is a heterotrimeric complex composed of an alpha (EIF2S1), a beta (EIF2S2) and a gamma (EIF2S3) chain. eIF2 is member of the 43S pre-initiation complex (43S PIC). Interacts (via C-terminus) with CDC123; the interaction is direct.

The protein localises to the cytoplasm. It is found in the cytosol. It catalyses the reaction GTP + H2O = GDP + phosphate + H(+). Member of the eIF2 complex that functions in the early steps of protein synthesis by forming a ternary complex with GTP and initiator tRNA. This complex binds to a 40S ribosomal subunit, followed by mRNA binding to form the 43S pre-initiation complex (43S PIC). Junction of the 60S ribosomal subunit to form the 80S initiation complex is preceded by hydrolysis of the GTP bound to eIF2 and release of an eIF2-GDP binary complex. In order for eIF2 to recycle and catalyze another round of initiation, the GDP bound to eIF2 must exchange with GTP by way of a reaction catalyzed by eIF-2B. The chain is Eukaryotic translation initiation factor 2 subunit 3 (EIF2S3) from Bos taurus (Bovine).